Here is a 126-residue protein sequence, read N- to C-terminus: Urease subunit beta (126 aa).

The protein belongs to the urease beta subunit family. As to quaternary structure, heterotrimer of UreA (gamma), UreB (beta) and UreC (alpha) subunits. Three heterotrimers associate to form the active enzyme.

The protein resides in the cytoplasm. It catalyses the reaction urea + 2 H2O + H(+) = hydrogencarbonate + 2 NH4(+). Its pathway is nitrogen metabolism; urea degradation; CO(2) and NH(3) from urea (urease route): step 1/1. The sequence is that of Urease subunit beta from Sporosarcina pasteurii (Bacillus pasteurii).